Consider the following 226-residue polypeptide: UPF0111 protein AF_1799 (226 aa).

The protein belongs to the UPF0111 family.

The sequence is that of UPF0111 protein AF_1799 from Archaeoglobus fulgidus (strain ATCC 49558 / DSM 4304 / JCM 9628 / NBRC 100126 / VC-16).